A 1261-amino-acid polypeptide reads, in one-letter code: Myosin-1 (1261 aa).

The disordered stretch occupies residues 1–39 (MGHSRRPVGGEKKSRGFGRSKVADVGDGRQAGKPQVKKA). One can recognise a Myosin motor domain in the interval 49–728 (IGVSDLTLLS…TLFALEAMRD (680 aa)). Residue 142-149 (GESGAGKT) participates in ATP binding. Serine 370 bears the Phosphoserine mark. Residues 417-499 (SIGILDIYGF…PGVFAALNDA (83 aa)) form an actin-binding region. 2 consecutive IQ domains span residues 732 to 752 (HNMA…RIEC) and 753 to 778 (AIRI…QGHQ). Residues 786-973 (RRRMSLLGSR…KSHTIHTSPG (188 aa)) enclose the TH1 domain. Disordered regions lie at residues 956 to 1093 (ASPN…KALY) and 1139 to 1261 (YLEE…DDEW). Pro residues-rich tracts occupy residues 1019–1029 (RPTPKPQPLPQ), 1038–1052 (IPAP…PVPQ), 1072–1084 (APPP…PPAP), and 1147–1159 (TPKP…PPAA). Residues 1084-1145 (PKKATAKALY…PQAYLEEQVA (62 aa)) form the SH3 domain. The span at 1160–1181 (PRASPVPSANGAAATAAAAKAK) shows a compositional bias: low complexity. Over residues 1212-1233 (VSMNSQDSSGGSGRGTPNSTSN) the composition is skewed to polar residues. Over residues 1234 to 1243 (ASLAGGLAEA) the composition is skewed to low complexity.

It belongs to the TRAFAC class myosin-kinesin ATPase superfamily. Myosin family. Phosphorylation of the TEDS site (Ser-370) is required for the polarization of the actin cytoskeleton. Phosphorylation probably activates the myosin-I ATPase activity.

It localises to the cytoplasm. The protein localises to the cytoskeleton. Its subcellular location is the actin patch. In terms of biological role, type-I myosin implicated in the organization of the actin cytoskeleton. Required for proper actin cytoskeleton polarization. At the cell cortex, assembles in patch-like structures together with proteins from the actin-polymerizing machinery and promotes actin assembly. Functions as actin nucleation-promoting factor (NPF) for the Arp2/3 complex. Plays an important role in polarized growth, spore germination, hyphal morphogenesis, and septal wall formation. This is Myosin-1 (myoA) from Aspergillus oryzae (strain ATCC 42149 / RIB 40) (Yellow koji mold).